The chain runs to 546 residues: 2-succinyl-5-enolpyruvyl-6-hydroxy-3-cyclohexene-1-carboxylate synthase (546 aa).

It belongs to the TPP enzyme family. MenD subfamily. In terms of assembly, homodimer. Mg(2+) serves as cofactor. It depends on Mn(2+) as a cofactor. The cofactor is thiamine diphosphate.

It carries out the reaction isochorismate + 2-oxoglutarate + H(+) = 5-enolpyruvoyl-6-hydroxy-2-succinyl-cyclohex-3-ene-1-carboxylate + CO2. It functions in the pathway quinol/quinone metabolism; 1,4-dihydroxy-2-naphthoate biosynthesis; 1,4-dihydroxy-2-naphthoate from chorismate: step 2/7. It participates in quinol/quinone metabolism; menaquinone biosynthesis. Catalyzes the thiamine diphosphate-dependent decarboxylation of 2-oxoglutarate and the subsequent addition of the resulting succinic semialdehyde-thiamine pyrophosphate anion to isochorismate to yield 2-succinyl-5-enolpyruvyl-6-hydroxy-3-cyclohexene-1-carboxylate (SEPHCHC). The chain is 2-succinyl-5-enolpyruvyl-6-hydroxy-3-cyclohexene-1-carboxylate synthase from Mycolicibacterium smegmatis (strain ATCC 700084 / mc(2)155) (Mycobacterium smegmatis).